The chain runs to 479 residues: Aspartyl/glutamyl-tRNA(Asn/Gln) amidotransferase subunit B (479 aa).

This sequence belongs to the GatB/GatE family. GatB subfamily. As to quaternary structure, heterotrimer of A, B and C subunits.

The catalysed reaction is L-glutamyl-tRNA(Gln) + L-glutamine + ATP + H2O = L-glutaminyl-tRNA(Gln) + L-glutamate + ADP + phosphate + H(+). It carries out the reaction L-aspartyl-tRNA(Asn) + L-glutamine + ATP + H2O = L-asparaginyl-tRNA(Asn) + L-glutamate + ADP + phosphate + 2 H(+). Allows the formation of correctly charged Asn-tRNA(Asn) or Gln-tRNA(Gln) through the transamidation of misacylated Asp-tRNA(Asn) or Glu-tRNA(Gln) in organisms which lack either or both of asparaginyl-tRNA or glutaminyl-tRNA synthetases. The reaction takes place in the presence of glutamine and ATP through an activated phospho-Asp-tRNA(Asn) or phospho-Glu-tRNA(Gln). The sequence is that of Aspartyl/glutamyl-tRNA(Asn/Gln) amidotransferase subunit B from Clostridium beijerinckii (strain ATCC 51743 / NCIMB 8052) (Clostridium acetobutylicum).